Here is a 273-residue protein sequence, read N- to C-terminus: Suppressor protein STM1 (273 aa).

A disordered region spans residues 1-153; sequence MSNPFDLLGN…PKTAQLSLQD (153 aa). Ser-2 is modified (N-acetylserine). Phosphoserine; by MTOR is present on residues Ser-32, Ser-41, and Ser-45. Lys-46 is covalently cross-linked (Glycyl lysine isopeptide (Lys-Gly) (interchain with G-Cter in ubiquitin)). A phosphoserine; by MTOR mark is found at Ser-55 and Ser-73. Ser-55 is modified (phosphoserine). 3 stretches are compositionally biased toward basic and acidic residues: residues 60–77, 89–104, and 111–124; these read AIRD…KDVT, RATD…DTKK, and GDDK…KEAQ. Position 118 is a phosphoserine (Ser-118). Glycyl lysine isopeptide (Lys-Gly) (interchain with G-Cter in ubiquitin) cross-links involve residues Lys-121 and Lys-171. Position 181 is a phosphothreonine; by MTOR (Thr-181). Lys-184 participates in a covalent cross-link: Glycyl lysine isopeptide (Lys-Gly) (interchain with G-Cter in ubiquitin). Thr-218 is subject to Phosphothreonine; by MTOR. The disordered stretch occupies residues 219–273; it reads RKNFGDRNNNSRNNFNNRRGGRGARKGNNTANATNSANTVQKNRNIDVSNLPSLA. Low complexity-rich tracts occupy residues 224-236 and 244-257; these read DRNN…FNNR and KGNN…SANT. At Ser-229 the chain carries Phosphoserine. Positions 258 to 273 are enriched in polar residues; it reads VQKNRNIDVSNLPSLA.

Belongs to the SERBP1-HABP4 family. In terms of assembly, associates with mature 80S ribosomes. Binds to the head domain of the 40S ribosomal subunit and prevents mRNA binding by inserting its alpha-helix domain towards the mRNA entry tunnel at the decoding site, where it blocks the binding of tRNA and mRNA at the A- and P-sites. Interacts with EFT1; interaction sequesters EFT1 at the A-site of the ribosome, thereby blocking the interaction sites of the mRNA-tRNA complex, promoting ribosome stabilization and hibernation. Interacts with CDC13. Associates with the telomere-proximal Y' element. Phosphorylation by TORC1 upon nutrient replenishment inhibits STM1 and causes its release from dormant ribosomes.

The protein resides in the cytoplasm. Its subcellular location is the nucleus. It localises to the perinuclear region. Its function is as follows. Ribosome preservation factor that protect a small pool of nontranslating, vacant ribosomes in cells under nutrient starvation conditions. Under nutrient-limiting conditions, cells reduce ribosome biogenesis and degrade ribosomes via autophagy (ribophagy) or proteasomal degradation. To avoid excessive degradation during starvation, STM1 binds to and protects 80S ribosomes from proteasomal degradation. Under nutrient-sufficient conditions, TORC1 phosphorylates and inhibits STM1 to prevent formation of dormant 80S ribosomes. Acts as an inhibitor of mRNA translation by promoting ribosome hibernation: clamps the two ribosomal subunits, thereby preventing their dissociation, and inhibits translation by excluding mRNA-binding. Acts via its association with eEF2 (EFT1), promoting ribosome stabilization and storage in an inactive state. May also repress translation by preventing association of eEF3 (YEF3 and HEF3) with ribosomes. Binds specifically G4 quadruplex (these are four-stranded right-handed helices, stabilized by guanine base quartets) and purine motif triplex (characterized by a third, antiparallel purine-rich DNA strand located within the major groove of a homopurine stretch of duplex DNA) nucleic acid structures. These structures may be present at telomeres or in rRNAs. Acts with CDC13 to control telomere length homeostasis. Involved in the control of the apoptosis-like cell death. This Saccharomyces cerevisiae (strain ATCC 204508 / S288c) (Baker's yeast) protein is Suppressor protein STM1.